The sequence spans 187 residues: tRNA (mnm(5)s(2)U34)-methyltransferase (187 aa).

Asn31, Asn33, Asp51, Gln53, His77, and Glu78 together coordinate S-adenosyl-L-methionine.

Belongs to the methyltransferase superfamily. MnmM family. In terms of assembly, homodimer.

The enzyme catalyses 5-aminomethyl-2-thiouridine(34) in tRNA + S-adenosyl-L-methionine = 5-methylaminomethyl-2-thiouridine(34) in tRNA + S-adenosyl-L-homocysteine + H(+). It functions in the pathway tRNA modification. Its function is as follows. Involved in the biosynthesis of 5-methylaminomethyl-2-thiouridine (mnm(5)s(2)U) at the wobble position (U34) in tRNA. Catalyzes the transfer of a methyl group from S-adenosyl-L-methionine to nm(5)s(2)U34 to form mnm(5)s(2)U34. This chain is tRNA (mnm(5)s(2)U34)-methyltransferase, found in Staphylococcus aureus (strain NCTC 8325 / PS 47).